A 241-amino-acid polypeptide reads, in one-letter code: Small ribosomal subunit protein uS2 (241 aa).

Belongs to the universal ribosomal protein uS2 family.

The sequence is that of Small ribosomal subunit protein uS2 from Erwinia tasmaniensis (strain DSM 17950 / CFBP 7177 / CIP 109463 / NCPPB 4357 / Et1/99).